The chain runs to 954 residues: E3 ubiquitin-protein ligase arkadia (954 aa).

The span at 50 to 66 shows a compositional bias: polar residues; sequence LCSDTNKQQRDLNSNGT. Disordered regions lie at residues 50-175 and 193-276; these read LCSD…VSSL and RKRF…SGGM. Low complexity-rich tracts occupy residues 112-131 and 232-251; these read SSFSDCISSPSSSSHFGDSD and SSSSSSENDLSSESSSSSST. The SUMO interaction motif 1 (SIM) motif lies at 280-284; it reads VVVIE. Residues 305-311 carry the SUMO interaction motif 2 (SIM) motif; that stretch reads EVEIVTV. Disordered regions lie at residues 318–346, 364–452, and 485–509; these read RTTLGHPRSHWGQNTQSGRTQEQRTRNRV, TVDE…MPRL, and HFPHHHHHHHQSSHPGVPLSPSFRD. Positions 328–337 are enriched in polar residues; that stretch reads WGQNTQSGRT. The SUMO interaction motif 3 (SIM) motif lies at 360–364; the sequence is VVDLT. Positions 385–395 are enriched in low complexity; that stretch reads VSTVSSNTSTS. The span at 485-496 shows a compositional bias: basic residues; that stretch reads HFPHHHHHHHQS. Residues 867 to 869 form a ubiquitin binding region; it reads YPH. Zn(2+)-binding residues include Cys902 and Cys905. The RING-type; atypical zinc-finger motif lies at 902 to 943; sequence CTICLSILEEGEDVRRLPCMHLFHQVCVDQWLITNKKCPICR. The segment at 917–921 is ubiquitin binding; sequence RLPCM. The Zn(2+) site is built by His925 and Cys928.

This sequence belongs to the Arkadia family. As to quaternary structure, monomer.

The protein resides in the nucleus. The protein localises to the cytoplasm. It is found in the PML body. The enzyme catalyses S-ubiquitinyl-[E2 ubiquitin-conjugating enzyme]-L-cysteine + [acceptor protein]-L-lysine = [E2 ubiquitin-conjugating enzyme]-L-cysteine + N(6)-ubiquitinyl-[acceptor protein]-L-lysine.. It participates in protein modification; protein ubiquitination. Binds free ubiquitin non-covalently via its RING-type zinc finger. Ubiquitin-binding leads to enhance the E3 ubiquitin-protein ligase activity by stabilizing the ubiquitin-conjugating enzyme E2 (donor ubiquitin) in the 'closed' conformation and activating ubiquitin transfer. Its function is as follows. E3 ubiquitin-protein ligase required for mesoderm patterning during embryonic development. Acts as an enhancer of the transcriptional responses of the smad2/smad3 effectors, which are activated downstream of BMP. Acts by mediating ubiquitination and degradation of SMAD inhibitors such as smad7, inducing their proteasomal degradation and thereby enhancing the transcriptional activity of TGF-beta and BMP. Specifically binds polysumoylated chains via SUMO interaction motifs (SIMs) and mediates ubiquitination of sumoylated substrates. The regulation of the BMP-SMAD signaling is however independent of sumoylation and is not dependent of SUMO interaction motifs (SIMs). The sequence is that of E3 ubiquitin-protein ligase arkadia (rnf111) from Xenopus tropicalis (Western clawed frog).